A 192-amino-acid chain; its full sequence is Casparian strip membrane protein 1 (192 aa).

The Cytoplasmic portion of the chain corresponds to 1-30; sequence MSTTVDVPESSNVAKGKAIAVARPGGWKKG. Residues 31–51 form a helical membrane-spanning segment; the sequence is LAIMDFILRLGGIAASLGAAA. Residues 52-80 are Extracellular-facing; that stretch reads TMGTSDQTLPFFTQFFQFEASYDSFTTFQ. A helical transmembrane segment spans residues 81-101; that stretch reads FFVITMALVAGYLVLSLPFSV. Residues 102–113 lie on the Cytoplasmic side of the membrane; the sequence is VAIIRPHAPGPR. The chain crosses the membrane as a helical span at residues 114 to 134; sequence LFLIILDTVFLTLATASGASA. The Extracellular portion of the chain corresponds to 135 to 166; that stretch reads AAIVYLAHNGNQDSNWLAICNQFGDFCAQTSG. The helical transmembrane segment at 167 to 187 threads the bilayer; that stretch reads AVVASFVAVVILVLLVIMSAL. Residues 188 to 192 are Cytoplasmic-facing; the sequence is ALRRH.

It belongs to the Casparian strip membrane proteins (CASP) family. As to quaternary structure, homodimer and heterodimers.

The protein localises to the cell membrane. Its function is as follows. Regulates membrane-cell wall junctions and localized cell wall deposition. Required for establishment of the Casparian strip membrane domain (CSD) and the subsequent formation of Casparian strips, a cell wall modification of the root endodermis that determines an apoplastic barrier between the intraorganismal apoplasm and the extraorganismal apoplasm and prevents lateral diffusion. The chain is Casparian strip membrane protein 1 from Vigna unguiculata (Cowpea).